An 831-amino-acid polypeptide reads, in one-letter code: Translation initiation factor IF-2 (831 aa).

The span at 1 to 11 shows a compositional bias: basic and acidic residues; sequence MADEIKKENAP. A disordered region spans residues 1 to 236; the sequence is MADEIKKENA…GKHAKKASAL (236 aa). Residues 22–31 show a composition bias toward low complexity; the sequence is TTVSGTSTTG. Basic and acidic residues-rich tracts occupy residues 49 to 150 and 157 to 166; these read DLER…RYAD and DNGKLDDYSD. The segment covering 190 to 200 has biased composition (basic residues); the sequence is RSKNKVVKAKK. The span at 201–225 shows a compositional bias: basic and acidic residues; the sequence is GGRDDENGNKNERQSDRRNQKDVKG. Positions 330–500 constitute a tr-type G domain; that stretch reads HRAPVVTIMG…LLQSEVLELT (171 aa). A G1 region spans residues 339–346; it reads GHVDHGKT. Residue 339-346 participates in GTP binding; it reads GHVDHGKT. Residues 364 to 368 are G2; the sequence is GITQH. A G3 region spans residues 386-389; that stretch reads DTPG. GTP is bound by residues 386 to 390 and 440 to 443; these read DTPGH and NKID. The tract at residues 440–443 is G4; it reads NKID. Residues 476–478 form a G5 region; that stretch reads SAK.

The protein belongs to the TRAFAC class translation factor GTPase superfamily. Classic translation factor GTPase family. IF-2 subfamily.

It localises to the cytoplasm. One of the essential components for the initiation of protein synthesis. Protects formylmethionyl-tRNA from spontaneous hydrolysis and promotes its binding to the 30S ribosomal subunits. Also involved in the hydrolysis of GTP during the formation of the 70S ribosomal complex. The chain is Translation initiation factor IF-2 from Histophilus somni (strain 2336) (Haemophilus somnus).